We begin with the raw amino-acid sequence, 361 residues long: Biotin synthase (361 aa).

The 232-residue stretch at 47–278 (VHGDEVALCG…AAHIFVMGGR (232 aa)) folds into the Radical SAM core domain. Positions 65, 69, and 72 each coordinate [4Fe-4S] cluster. [2Fe-2S] cluster-binding residues include S110, C143, and C203.

The protein belongs to the radical SAM superfamily. Biotin synthase family. As to quaternary structure, homodimer. The cofactor is [4Fe-4S] cluster. Requires [2Fe-2S] cluster as cofactor.

The enzyme catalyses (4R,5S)-dethiobiotin + (sulfur carrier)-SH + 2 reduced [2Fe-2S]-[ferredoxin] + 2 S-adenosyl-L-methionine = (sulfur carrier)-H + biotin + 2 5'-deoxyadenosine + 2 L-methionine + 2 oxidized [2Fe-2S]-[ferredoxin]. The protein operates within cofactor biosynthesis; biotin biosynthesis; biotin from 7,8-diaminononanoate: step 2/2. In terms of biological role, catalyzes the conversion of dethiobiotin (DTB) to biotin by the insertion of a sulfur atom into dethiobiotin via a radical-based mechanism. The polypeptide is Biotin synthase (Anaeromyxobacter dehalogenans (strain 2CP-C)).